The chain runs to 78 residues: Small ribosomal subunit protein bS18A (78 aa).

The protein belongs to the bacterial ribosomal protein bS18 family. Part of the 30S ribosomal subunit. Forms a tight heterodimer with protein bS6.

In terms of biological role, binds as a heterodimer with protein bS6 to the central domain of the 16S rRNA, where it helps stabilize the platform of the 30S subunit. The sequence is that of Small ribosomal subunit protein bS18A from Streptomyces avermitilis (strain ATCC 31267 / DSM 46492 / JCM 5070 / NBRC 14893 / NCIMB 12804 / NRRL 8165 / MA-4680).